We begin with the raw amino-acid sequence, 473 residues long: Adenosylhomocysteinase (473 aa).

3 residues coordinate substrate: T60, D135, and E197. Position 198 to 200 (198 to 200) interacts with NAD(+); sequence TTT. The substrate site is built by K227 and D231. Residues N232, 261 to 266, E284, N319, 340 to 342, and N385 each bind NAD(+); these read GFGDVG and IGH.

This sequence belongs to the adenosylhomocysteinase family. The cofactor is NAD(+).

It is found in the cytoplasm. It catalyses the reaction S-adenosyl-L-homocysteine + H2O = L-homocysteine + adenosine. Its pathway is amino-acid biosynthesis; L-homocysteine biosynthesis; L-homocysteine from S-adenosyl-L-homocysteine: step 1/1. May play a key role in the regulation of the intracellular concentration of adenosylhomocysteine. The protein is Adenosylhomocysteinase of Bradyrhizobium sp. (strain BTAi1 / ATCC BAA-1182).